The sequence spans 78 residues: Protein SlyX homolog (78 aa).

The protein belongs to the SlyX family.

The protein is Protein SlyX homolog of Xylella fastidiosa (strain M23).